The chain runs to 240 residues: 3-dehydroquinate dehydratase (240 aa).

Residues S15, 42 to 44 (EWR), and R73 each bind 3-dehydroquinate. Catalysis depends on H132, which acts as the Proton donor/acceptor. K160 (schiff-base intermediate with substrate) is an active-site residue. Residues R202, S221, and Q225 each coordinate 3-dehydroquinate.

Belongs to the type-I 3-dehydroquinase family. As to quaternary structure, homodimer.

The enzyme catalyses 3-dehydroquinate = 3-dehydroshikimate + H2O. It functions in the pathway metabolic intermediate biosynthesis; chorismate biosynthesis; chorismate from D-erythrose 4-phosphate and phosphoenolpyruvate: step 3/7. In terms of biological role, involved in the third step of the chorismate pathway, which leads to the biosynthesis of aromatic amino acids. Catalyzes the cis-dehydration of 3-dehydroquinate (DHQ) and introduces the first double bond of the aromatic ring to yield 3-dehydroshikimate. This is 3-dehydroquinate dehydratase from Latilactobacillus sakei subsp. sakei (strain 23K) (Lactobacillus sakei subsp. sakei).